Consider the following 470-residue polypeptide: Cytochrome P450 monooxygenase sirC (470 aa).

The helical transmembrane segment at 12–34 (LRGMVVGTIMLLCYRYGLALSIL) threads the bilayer. The N-linked (GlcNAc...) asparagine glycan is linked to N399. Residue C410 participates in heme binding.

It belongs to the cytochrome P450 family. Requires heme as cofactor.

Its subcellular location is the membrane. Its pathway is mycotoxin biosynthesis. Functionally, cytochrome P450 monooxygenase; part of the gene cluster that mediates the biosynthesis of sirodesmin PL, an epipolythiodioxopiperazine (ETP) characterized by a disulfide bridged cyclic dipeptide and that acts as a phytotoxin which is involved in the blackleg didease of canola. SirD catalyzes the O-prenylation of L-tyrosine (L-Tyr) in the presence of dimethylallyl diphosphate (DMAPP) to yield 4-O-dimethylallyl-L-Tyr, and therefore represents probably the first pathway-specific enzyme in the biosynthesis of sirodesmin PL. 4-O-dimethylallyl-L-Tyr, then undergoes condensation with L-Ser in a reaction catalyzed by the non-ribosomal peptide synthase sirP to form the diketopiperazine (DKP) backbone. Further bishydroxylation of the DKP performed by the cytochrome P450 monooxygenase sirC leads to the production of the intermediate phomamide. This step is essential to form the reactive thiol group required for toxicity of sirodesmin PL. The next steps of sirodesmin biosynthesis are not well understood yet, but some predictions could be made from intermediate compounds identification. Phomamide is converted into phomalizarine via oxidation, probably by sirT. Further oxidation, methylation (by sirM or sirN) and reduction steps convert phomalizarine to deacetyl sirodesmin. Finally, acetyltransferase sirH probably acetylates deacetyl sirodesmin to produce sirodesmin PL. In Leptosphaeria maculans (Blackleg fungus), this protein is Cytochrome P450 monooxygenase sirC.